A 75-amino-acid polypeptide reads, in one-letter code: Small ribosomal subunit protein bS18 (75 aa).

It belongs to the bacterial ribosomal protein bS18 family. As to quaternary structure, part of the 30S ribosomal subunit. Forms a tight heterodimer with protein bS6.

Its function is as follows. Binds as a heterodimer with protein bS6 to the central domain of the 16S rRNA, where it helps stabilize the platform of the 30S subunit. The chain is Small ribosomal subunit protein bS18 from Acinetobacter baylyi (strain ATCC 33305 / BD413 / ADP1).